The chain runs to 148 residues: RxLR effector protein SFI7 (148 aa).

Positions 1–22 (MRAYFVLLVAATAILTYGGATA) are cleaved as a signal peptide. Residue N32 is glycosylated (N-linked (GlcNAc...) asparagine). The RxLR-dEER motif lies at 44–58 (RSLRVAPSGGNGEER).

Belongs to the RxLR effector family.

It localises to the secreted. It is found in the host cytoplasm. The protein localises to the host cell membrane. Effector that suppresses flg22-induced post-translational MAP kinase activation in tomato but not in Arabidopsis. The perception of highly conserved pathogen- or microbe-associated molecular patterns (PAMPs/MAMPs), such as flg22, triggers converging signaling pathways recruiting MAP kinase cascades and inducing transcriptional re-programming, yielding a generic antimicrobial response. Also partially attenuates INF1-triggered cell death. The polypeptide is RxLR effector protein SFI7 (Phytophthora infestans (strain T30-4) (Potato late blight agent)).